Here is a 416-residue protein sequence, read N- to C-terminus: Enolase (416 aa).

Glutamine 162 is a binding site for (2R)-2-phosphoglycerate. Glutamate 204 acts as the Proton donor in catalysis. Mg(2+) contacts are provided by aspartate 241, glutamate 282, and aspartate 309. Residues lysine 334, arginine 363, serine 364, and lysine 385 each coordinate (2R)-2-phosphoglycerate. The active-site Proton acceptor is the lysine 334.

This sequence belongs to the enolase family. It depends on Mg(2+) as a cofactor.

It localises to the cytoplasm. The protein resides in the secreted. Its subcellular location is the cell surface. It carries out the reaction (2R)-2-phosphoglycerate = phosphoenolpyruvate + H2O. It functions in the pathway carbohydrate degradation; glycolysis; pyruvate from D-glyceraldehyde 3-phosphate: step 4/5. Its function is as follows. Catalyzes the reversible conversion of 2-phosphoglycerate (2-PG) into phosphoenolpyruvate (PEP). It is essential for the degradation of carbohydrates via glycolysis. The chain is Enolase from Campylobacter concisus (strain 13826).